We begin with the raw amino-acid sequence, 735 residues long: FHF complex subunit HOOK-interacting protein 2B (735 aa).

The segment at Ser183–Gln229 is disordered. Low complexity predominate over residues Ser196–Gly221.

It belongs to the FHIP family.

The chain is FHF complex subunit HOOK-interacting protein 2B (fhip2b) from Danio rerio (Zebrafish).